The chain runs to 420 residues: UDP-N-acetylglucosamine 1-carboxyvinyltransferase (420 aa).

Phosphoenolpyruvate is bound at residue 22–23; it reads KN. A UDP-N-acetyl-alpha-D-glucosamine-binding site is contributed by Arg91. Residue Cys115 is the Proton donor of the active site. At Cys115 the chain carries 2-(S-cysteinyl)pyruvic acid O-phosphothioketal. UDP-N-acetyl-alpha-D-glucosamine-binding positions include 120–124, 160–163, Asp305, and Ile327; these read RPVDL and KVSV.

It belongs to the EPSP synthase family. MurA subfamily.

The protein localises to the cytoplasm. The catalysed reaction is phosphoenolpyruvate + UDP-N-acetyl-alpha-D-glucosamine = UDP-N-acetyl-3-O-(1-carboxyvinyl)-alpha-D-glucosamine + phosphate. Its pathway is cell wall biogenesis; peptidoglycan biosynthesis. Functionally, cell wall formation. Adds enolpyruvyl to UDP-N-acetylglucosamine. The protein is UDP-N-acetylglucosamine 1-carboxyvinyltransferase of Erwinia tasmaniensis (strain DSM 17950 / CFBP 7177 / CIP 109463 / NCPPB 4357 / Et1/99).